Reading from the N-terminus, the 317-residue chain is Melanocyte-stimulating hormone receptor (317 aa).

The Extracellular segment spans residues 1-37 (MSVQGPQRRLLGSVNSTSPAAPRLGLAANQTGPRCLE). N-linked (GlcNAc...) asparagine glycans are attached at residues asparagine 15 and asparagine 29. The chain crosses the membrane as a helical span at residues 38 to 63 (VSVPDGLFLSLGLVSVVENVLVVAAI). Over 64–72 (AKNRNLHSP) the chain is Cytoplasmic. The helical transmembrane segment at 73-93 (MYYFICCLAVSDLLVSVSSVL) threads the bilayer. Topologically, residues 94-118 (ETAVMLLLEAGTLAGRAAVVQQLDD) are extracellular. The chain crosses the membrane as a helical span at residues 119–140 (IIDVLVCGAMVSSLCFLGAIAV). At 141–163 (DRYISIFYALRYHSIVTLPRAWR) the chain is on the cytoplasmic side. Residues 164-183 (AISAIWVASVLSSTLFIAYY) form a helical membrane-spanning segment. At 184–191 (DHTAVLLC) the chain is on the extracellular side. The helical transmembrane segment at 192–211 (LVSFFVAMLVLMAVLYVHML) threads the bilayer. Residues 212-240 (ARACQHARGIARLHKRQRPVHQGLGLKGA) are Cytoplasmic-facing. The helical transmembrane segment at 241–266 (ATLTILLGIFFLCWGPFFLHLSLMVL) threads the bilayer. Over 267 to 279 (CPRHPICGCVFKN) the chain is Extracellular. A helical transmembrane segment spans residues 280-300 (FNLFLTLIICNSIVDPLIYAF). The Cytoplasmic segment spans residues 301-317 (RSQELRKTLREVLLCSW). A lipid anchor (S-palmitoyl cysteine) is attached at cysteine 315.

The protein belongs to the G-protein coupled receptor 1 family. Interacts with MGRN1, but does not undergo MGRN1-mediated ubiquitination; this interaction competes with GNAS-binding and thus inhibits agonist-induced cAMP production. Interacts with OPN3; the interaction results in a decrease in MC1R-mediated cAMP signaling and ultimately a decrease in melanin production in melanocytes.

Its subcellular location is the cell membrane. Its function is as follows. Receptor for MSH (alpha, beta and gamma) and ACTH. The activity of this receptor is mediated by G proteins which activate adenylate cyclase. Mediates melanogenesis, the production of eumelanin (black/brown) and phaeomelanin (red/yellow), via regulation of cAMP signaling in melanocytes. The polypeptide is Melanocyte-stimulating hormone receptor (MC1R) (Puma yagouaroundi (Jaguarundi)).